The chain runs to 80 residues: RNA-binding protein Hfq (80 aa).

Residues Glu7–Leu67 form the Sm domain.

Belongs to the Hfq family. As to quaternary structure, homohexamer.

Its function is as follows. RNA chaperone that binds small regulatory RNA (sRNAs) and mRNAs to facilitate mRNA translational regulation in response to envelope stress, environmental stress and changes in metabolite concentrations. Also binds with high specificity to tRNAs. The chain is RNA-binding protein Hfq from Aquifex aeolicus (strain VF5).